A 105-amino-acid polypeptide reads, in one-letter code: Malonate decarboxylase acyl carrier protein (105 aa).

Ser-28 carries the post-translational modification O-(phosphoribosyl dephospho-coenzyme A)serine.

This sequence belongs to the MdcC family. Post-translationally, covalently binds the prosthetic group of malonate decarboxylase.

The protein localises to the cytoplasm. Subunit of malonate decarboxylase, it is an acyl carrier protein to which acetyl and malonyl thioester residues are bound via a 2'-(5''-phosphoribosyl)-3'-dephospho-CoA prosthetic group and turn over during the catalytic mechanism. This chain is Malonate decarboxylase acyl carrier protein, found in Xanthomonas campestris pv. campestris (strain 8004).